Consider the following 34-residue polypeptide: MSDIN-like toxin proprotein 12 (34 aa).

Positions 1 to 10 (MSDINATRLP) are excised as a propeptide. The cyclopeptide (His-Pro) cross-link spans 11 to 19 (HPFPLGLQP). Residues 20–34 (CAGDVDNLTLTKGEG) constitute a propeptide that is removed on maturation.

Belongs to the MSDIN fungal toxin family. In terms of processing, processed by the macrocyclase-peptidase enzyme POPB to yield a toxic cyclic nonapeptide. POPB first removes 10 residues from the N-terminus. Conformational trapping of the remaining peptide forces the enzyme to release this intermediate rather than proceed to macrocyclization. The enzyme rebinds the remaining peptide in a different conformation and catalyzes macrocyclization of the N-terminal 9 residues.

Its function is as follows. Probable toxin that belongs to the MSDIN-like toxin family responsible for a large number of food poisoning cases and deaths. This chain is MSDIN-like toxin proprotein 12, found in Amanita bisporigera (Destroying angel).